Reading from the N-terminus, the 114-residue chain is MRFFATLVLALPALAMATAVPRDVNGGTPPKSCSSGPVYCCNKTEDHLDKGTTALLGLLNIKIGDLKDLVGLNCSPLSVIGVGGNSCSAQTVCCTNTYQHGLVNVGCTPINIGL.

An N-terminal signal peptide occupies residues 1–17 (MRFFATLVLALPALAMA). 4 cysteine pairs are disulfide-bonded: cysteine 33-cysteine 93, cysteine 40-cysteine 87, cysteine 41-cysteine 74, and cysteine 94-cysteine 107. Asparagine 42 is a glycosylation site (N-linked (GlcNAc...) asparagine).

It belongs to the fungal hydrophobin family. As to quaternary structure, self-assembles to form functional amyloid fibrils called rodlets. Self-assembly into fibrillar rodlets occurs spontaneously at hydrophobic:hydrophilic interfaces and the rodlets further associate laterally to form amphipathic monolayers.

Its subcellular location is the secreted. The protein localises to the cell wall. Aerial growth, conidiation, and dispersal of filamentous fungi in the environment rely upon a capability of their secreting small amphipathic proteins called hydrophobins (HPBs) with low sequence identity. Class I can self-assemble into an outermost layer of rodlet bundles on aerial cell surfaces, conferring cellular hydrophobicity that supports fungal growth, development and dispersal; whereas Class II form highly ordered films at water-air interfaces through intermolecular interactions but contribute nothing to the rodlet structure. The protein is Class I hydrophobin SC16 of Schizophyllum commune (strain H4-8 / FGSC 9210) (Split gill fungus).